We begin with the raw amino-acid sequence, 124 residues long: KESAAMKFERQHMDSTVATSSSPTYCNQMMKRRNMTQGYCKPVNTFVHESLADVHAVCSQENVACKNGKSNCYKSHSALHITDCRLKGNAKYPNCDYQTSQLQKQIIVACEGNPFVPVHFDASV.

Positions 7 and 10 each coordinate substrate. His12 acts as the Proton acceptor in catalysis. Intrachain disulfides connect Cys26–Cys84, Cys40–Cys95, Cys58–Cys110, and Cys65–Cys72. The N-linked (GlcNAc...) asparagine glycan is linked to Asn34. Substrate-binding positions include 41–45 (KPVNT), Lys66, and Arg85. His119 (proton donor) is an active-site residue.

The protein belongs to the pancreatic ribonuclease family. In terms of assembly, monomer. Interacts with and forms tight 1:1 complexes with RNH1. Dimerization of two such complexes may occur. Interaction with RNH1 inhibits this protein. As to expression, pancreas.

The protein localises to the secreted. It carries out the reaction an [RNA] containing cytidine + H2O = an [RNA]-3'-cytidine-3'-phosphate + a 5'-hydroxy-ribonucleotide-3'-[RNA].. The enzyme catalyses an [RNA] containing uridine + H2O = an [RNA]-3'-uridine-3'-phosphate + a 5'-hydroxy-ribonucleotide-3'-[RNA].. In terms of biological role, endonuclease that catalyzes the cleavage of RNA on the 3' side of pyrimidine nucleotides. Acts on single-stranded and double-stranded RNA. The polypeptide is Ribonuclease pancreatic (RNASE1) (Mesocricetus auratus (Golden hamster)).